Here is a 495-residue protein sequence, read N- to C-terminus: MAWPRIFQRGALLSRFSHHHMVVFLLTFFSYSLLHASRKTFSNVKVSISKQWTPSAFNKSTELLPVEIWSSNHLFPSAEEATLFLGMLDTIFLFSYAVGLFISGIVGDRLNLRWVLSFGMCSSALVVFVFGTLTEWLHFYNKGLYCSLWIVNGLLQSTGWPCVVAVMGNWFGKAGRGVVFGLWSACASVGNILGACLASSVLQYGYEYAFLVTAAVQFAGGIIIFFGLLVSPEEIGIPGIETEDNFEEDSHRPLINGAENEDEAEPNYSIQEGNTVTQVKAISFYQACCLPGVIAYSLAYACLKLVNYSFFFWLPFYLSNNFGWKEAEADQLSIWYDVGGIIGGTLQGFISDMLQKRAPVLALSLLLAIGSLVGYSRSPNDKSINALLMAVTGFFIGGPSNMISSAISADLGRQELIQGSSEALATVTGIVDGTGSIGAAVGQYLVSLIQDNLGWMWVFYFFILMTSCTVLFISPLIVRETCSLMQRRQTRVLNE.

Residues 16-36 traverse the membrane as a helical segment; the sequence is FSHHHMVVFLLTFFSYSLLHA. Asn58 is a glycosylation site (N-linked (GlcNAc...) asparagine). A run of 5 helical transmembrane segments spans residues 82-102, 114-134, 148-168, 178-198, and 210-230; these read TLFL…GLFI, WVLS…GTLT, LWIV…AVMG, VVFG…ACLA, and FLVT…GLLV. A glycan (N-linked (GlcNAc...) asparagine) is linked at Asn267. 6 consecutive transmembrane segments (helical) span residues 298–318, 334–354, 358–378, 387–407, 429–449, and 453–473; these read LAYA…PFYL, IWYD…SDML, APVL…YSRS, LLMA…SSAI, GIVD…VSLI, and LGWM…VLFI.

This sequence belongs to the major facilitator superfamily. Organophosphate:Pi antiporter (OPA) (TC 2.A.1.4) family. In terms of assembly, interacts with ATRAID; the interaction is direct and both proteins are mutually dependent for their stability. Post-translationally, glycosylated.

It localises to the endoplasmic reticulum membrane. It is found in the lysosome membrane. In terms of biological role, unlike the other SLC37 members, lacks glucose-6-phosphate antiporter activity. In osteoclasts, forms a transporter complex with ATRAID for nitrogen-containing-bisphophonates (N-BPs) required for releasing N-BP molecules that have trafficked to lysosomes through fluid-phase endocytosis into the cytosol. The chain is Sugar phosphate exchanger 3 (SLC37A3) from Bos taurus (Bovine).